The sequence spans 262 residues: uncharacterized protein (262 aa).

Residues 1–211 form the Radical SAM core domain; the sequence is MAFHVMIIPS…LLYLLDSYLE (211 aa). [4Fe-4S] cluster is bound by residues Cys13, Cys17, and Cys20.

Belongs to the radical SAM superfamily. Anaerobic sulfatase-maturating enzyme family. The cofactor is [4Fe-4S] cluster.

This is an uncharacterized protein from Methanothermobacter thermautotrophicus (strain ATCC 29096 / DSM 1053 / JCM 10044 / NBRC 100330 / Delta H) (Methanobacterium thermoautotrophicum).